The following is a 92-amino-acid chain: UPF0250 protein XOO3732 (92 aa).

Belongs to the UPF0250 family.

This is UPF0250 protein XOO3732 from Xanthomonas oryzae pv. oryzae (strain MAFF 311018).